The chain runs to 88 residues: Small ribosomal subunit protein bS20 (88 aa).

Over residues 1 to 10 the composition is skewed to basic residues; that stretch reads MANHKSSLKR. Residues 1 to 24 are disordered; the sequence is MANHKSSLKRAKQDIVRNTRNKSR.

This sequence belongs to the bacterial ribosomal protein bS20 family.

In terms of biological role, binds directly to 16S ribosomal RNA. This Desulfosudis oleivorans (strain DSM 6200 / JCM 39069 / Hxd3) (Desulfococcus oleovorans) protein is Small ribosomal subunit protein bS20.